The sequence spans 441 residues: Tubulin beta chain, nucleomorph (441 aa).

Residues glutamine 11, glutamate 69, serine 138, glycine 142, threonine 143, glycine 144, asparagine 204, and asparagine 226 each coordinate GTP. Mg(2+) is bound at residue glutamate 69.

This sequence belongs to the tubulin family. As to quaternary structure, dimer of alpha and beta chains. A typical microtubule is a hollow water-filled tube with an outer diameter of 25 nm and an inner diameter of 15 nM. Alpha-beta heterodimers associate head-to-tail to form protofilaments running lengthwise along the microtubule wall with the beta-tubulin subunit facing the microtubule plus end conferring a structural polarity. Microtubules usually have 13 protofilaments but different protofilament numbers can be found in some organisms and specialized cells. Requires Mg(2+) as cofactor.

Its function is as follows. Tubulin is the major constituent of microtubules, a cylinder consisting of laterally associated linear protofilaments composed of alpha- and beta-tubulin heterodimers. Microtubules grow by the addition of GTP-tubulin dimers to the microtubule end, where a stabilizing cap forms. Below the cap, tubulin dimers are in GDP-bound state, owing to GTPase activity of alpha-tubulin. This is Tubulin beta chain, nucleomorph (tubB) from Guillardia theta (Cryptophyte).